Consider the following 325-residue polypeptide: Serpentine receptor class delta-59 (325 aa).

The next 8 helical transmembrane spans lie at 14 to 34 (WYWP…LHLI), 45 to 65 (LKIF…FAFL), 75 to 95 (ISAA…TCFI), 97 to 117 (YHVF…TVLF), 132 to 152 (TYIM…IPFT), 190 to 210 (FLSA…GCLI), 235 to 255 (TLIH…IPSF), and 275 to 295 (ILVS…YFIV).

Belongs to the nematode receptor-like protein srd family.

The protein localises to the membrane. The chain is Serpentine receptor class delta-59 (srd-59) from Caenorhabditis elegans.